A 143-amino-acid polypeptide reads, in one-letter code: FAD synthase (143 aa).

Residues 10-11 (TF), 15-18 (HPGH), and Asp93 each bind ATP.

This sequence belongs to the archaeal FAD synthase family. In terms of assembly, homodimer. A divalent metal cation is required as a cofactor.

The catalysed reaction is FMN + ATP + H(+) = FAD + diphosphate. Its pathway is cofactor biosynthesis; FAD biosynthesis; FAD from FMN: step 1/1. In terms of biological role, catalyzes the transfer of the AMP portion of ATP to flavin mononucleotide (FMN) to produce flavin adenine dinucleotide (FAD) coenzyme. The protein is FAD synthase of Haloterrigena turkmenica (strain ATCC 51198 / DSM 5511 / JCM 9101 / NCIMB 13204 / VKM B-1734 / 4k) (Halococcus turkmenicus).